The following is a 738-amino-acid chain: Coiled-coil domain-containing protein 142 (738 aa).

The segment at 1–34 (MARASSSSGPLPPLANVPSSWAQPVGAGEERDEG) is disordered. A coiled-coil region spans residues 69-92 (ALQRLRATLLRLHREREQLLRARD). The segment at 682 to 704 (LSTLGGGGRGGGGGGGPGPSPEA) is disordered. The span at 685–698 (LGGGGRGGGGGGGP) shows a compositional bias: gly residues.

The polypeptide is Coiled-coil domain-containing protein 142 (Ccdc142) (Mus musculus (Mouse)).